We begin with the raw amino-acid sequence, 182 residues long: Keratin, high-sulfur matrix protein, B2D (182 aa).

Tandem repeats lie at residues 27 to 36 (PTCCQTSCCQ), 37 to 46 (PTSIQTSCCQ), 47 to 56 (PTSIQTSCCQ), 57 to 66 (PTSIQTSCCQ), 67 to 76 (PISIQTSCCQ), and 77 to 86 (PTCLQTSGCE). A 6 X 10 AA tandem repeats region spans residues 27–86 (PTCCQTSCCQPTSIQTSCCQPTSIQTSCCQPTSIQTSCCQPISIQTSCCQPTCLQTSGCE).

Functionally, the keratin products of mammalian epidermal derivatives such as wool and hair consist of microfibrils embedded in a rigid matrix of other proteins. The matrix proteins include the high-sulfur and high-tyrosine keratins, having molecular weights of 6-20 kDa, whereas the microfibrils contain the larger, low-sulfur keratins (40-56 kDa). This Ovis aries (Sheep) protein is Keratin, high-sulfur matrix protein, B2D.